A 613-amino-acid chain; its full sequence is MAEGVFQGAIGIDLGTTYSCVATYESSVEIIANEQGNRVTPSFVAFTPQERLIGDAAKNQAALNPRNTVFDAKRLIGRRFDDESVQKDMKTWPFKVIDVDGNPVIEVQYLEETKTFSPQEISAMVLTKMKEIAEAKIGKKVEKAVITVPAYFNDAQRQATKDAGAISGLNVLRIINEPTAAAIAYGLGAGKSEKERHVLIFDLGGGTFDVSLLHIAGGVYTVKSTSGNTHLGGQDFDTNLLEHFKAEFKKKTGLDISDDARALRRLRTAAERAKRTLSSVTQTTVEVDSLFDGEDFESSLTRARFEDLNAALFKSTLEPVEQVLKDAKISKSQIDEVVLVGGSTRIPKVQKLLSDFFDGKQLEKSINPDEAVAYGAAVQGAILTGQSTSDETKDLLLLDVAPLSLGVGMQGDIFGIVVPRNTTVPTIKRRTFTTVSDNQTTVQFPVYQGERVNCKENTLLGEFDLKNIPMMPAGEPVLEAIFEVDANGILKVTAVEKSTGKSSNITISNAVGRLSSEEIEKMVNQAEEFKAADEAFAKKHEARQRLESYVASIEQTVTDPVLSSKLKRGSKSKIEAALSDALAALQIEDPSADELRKAEVGLKRVVTKAMSSR.

At alanine 2 the chain carries N-acetylalanine. The interval 2–391 (AEGVFQGAIG…ILTGQSTSDE (390 aa)) is nucleotide binding domain (NBD). 16-18 (TTY) provides a ligand contact to ATP. Residue threonine 47 is modified to Phosphothreonine. Residues lysine 73, 205–207 (GGT), 271–278 (ERAKRTLS), and glycine 342 contribute to the ATP site. The tract at residues 392-402 (TKDLLLLDVAP) is inter-domain linker. The substrate binding domain (SBD) stretch occupies residues 403–613 (LSLGVGMQGD…RVVTKAMSSR (211 aa)). The Contributes to ribosome binding signature appears at 428 to 430 (KRR). Threonine 431 is subject to Phosphothreonine. The tract at residues 516–612 (SEEIEKMVNQ…KRVVTKAMSS (97 aa)) is lid domain (SBDalpha). The short motif at 574 to 582 (IEAALSDAL) is the Nuclear export signal element. Residues 601 to 613 (GLKRVVTKAMSSR) form a required for interaction with ribosomes region.

It belongs to the heat shock protein 70 family. Ssb-type Hsp70 subfamily. In terms of assembly, binds to ribosomes. Binds close to the ribosomal tunnel exit via contacts with both ribosomal proteins RPL35, RPL39 and RPL19, and rRNA. Directly interacts with nascent polypeptides. This interaction is dependent on the ribosome-associated complex (RAC). Interacts with SSE1.

Its subcellular location is the cytoplasm. It catalyses the reaction ATP + H2O = ADP + phosphate + H(+). Ribosome-bound, Hsp70-type chaperone that assists in the cotranslational folding of newly synthesized proteins in the cytosol. Stimulates folding by interacting with nascent chains, binding to short, largely hydrophobic sequences exposed by unfolded proteins, thereby stabilizing longer, more slowly translated, and aggregation-prone nascent polypeptides and domains that cannot fold stably until fully synthesized. The Hsp70-protein substrate interaction depends on ATP-binding and on allosteric regulation between the NBD and the SBD. The ATP-bound state is characterized by a fast exchange rate of substrate (low affinity state), while in the ADP-bound state exchange is much slower (high affinity state). During the Hsp70 cycle, the chaperone switches between the ATP-bound state (open conformation) and the ADP-bound state (closed conformation) by major conformational rearrangements involving mainly the lid domain. Ssb cooperates with a specific Hsp40/Hsp70 co-chaperone termed the ribosome-associated complex (RAC), which stimulates the ATPase activity of the ribosome-associated pool of Ssbs and switches it to the high affinity substrate binding state. Hsp110 chaperone SSE1 and FES1 act as nucleotide exchange factors that cause substrate release. The protein is Ribosome-associated molecular chaperone SSB2 of Saccharomyces cerevisiae (strain ATCC 204508 / S288c) (Baker's yeast).